The following is a 94-amino-acid chain: Integration host factor subunit beta (94 aa).

Belongs to the bacterial histone-like protein family. Heterodimer of an alpha and a beta chain.

This protein is one of the two subunits of integration host factor, a specific DNA-binding protein that functions in genetic recombination as well as in transcriptional and translational control. This is Integration host factor subunit beta from Salmonella arizonae (strain ATCC BAA-731 / CDC346-86 / RSK2980).